An 88-amino-acid polypeptide reads, in one-letter code: Electron transfer flavoprotein regulatory factor 1 (88 aa).

It belongs to the complex I LYR family. Homotetramer. Interacts with NDUFAB1. Interacts with ETFA. Interacts with ETFB.

It localises to the mitochondrion. In terms of biological role, acts as a regulator of the electron transfer flavoprotein by promoting the removal of flavin from the ETF holoenzyme (composed of ETFA and ETFB). The protein is Electron transfer flavoprotein regulatory factor 1 of Bos taurus (Bovine).